The sequence spans 840 residues: Protein argonaute-2 (840 aa).

Residues 210–329 (PVIEFVCEVL…LPLEVCNIVA (120 aa)) enclose the PAZ domain. Serine 368 is subject to Phosphoserine. In terms of domain architecture, Piwi spans 498-799 (LVVVILPGKT…VAFRARYHLV (302 aa)). A divalent metal cation contacts are provided by aspartate 578 and aspartate 650. Proline 681 bears the 4-hydroxyproline mark. Position 788 (histidine 788) interacts with a divalent metal cation. Phosphoserine is present on residues serine 805, serine 809, serine 812, and serine 815.

It belongs to the argonaute family. Ago subfamily. In terms of assembly, interacts with DICER1 through its Piwi domain and with TARBP2 during assembly of the RNA-induced silencing complex (RISC). Together, DICER1, AGO2 and TARBP2 constitute the trimeric RISC loading complex (RLC), or micro-RNA (miRNA) loading complex (miRLC). Within the RLC/miRLC, DICER1 and TARBP2 are required to process precursor miRNAs (pre-miRNAs) to mature miRNAs and then load them onto AGO2. AGO2 bound to the mature miRNA constitutes the minimal RISC and may subsequently dissociate from DICER1 and TARBP2. Note however that the term RISC has also been used to describe the trimeric RLC/miRLC. The formation of RISC complexes containing siRNAs rather than miRNAs appears to occur independently of DICER1. Interacts with AGO1. Also interacts with DDB1, DDX5, DDX6, DDX20, DHX30, DHX36, DDX47, DHX9, ELAVL, FXR1, GEMIN4, HNRNPF, IGF2BP1, ILF3, IMP8, MATR3, PABPC1, PRMT5, P4HA1, P4HB, RBM4, SART3, TNRC6A, TNRC6B, UPF1 and YBX1. Interacts with the P-body components DCP1A and XRN1. Associates with polysomes and messenger ribonucleoproteins (mNRPs). Interacts with RBM4; the interaction is modulated under stress-induced conditions, occurs under both cell proliferation and differentiation conditions and in an RNA- and phosphorylation-independent manner. Interacts with LIMD1, WTIP and AJUBA. Interacts with TRIM71; the interaction increases in presence of RNA. Interacts with APOBEC3G in an RNA-dependent manner. Interacts with APOBEC3A, APOBEC3C, APOBEC3F and APOBEC3H. Interacts with DICER1, TARBP2, EIF6, MOV10 and RPL7A (60S ribosome subunit); they form a large RNA-induced silencing complex (RISC). Interacts with FMR1. Interacts with ZFP36. Interacts with RC3H1; the interaction is RNA independent. Found in a complex composed of AGO2, CHD7 and ARB2A. Interacts with SND1 and SYT11. Interacts with CLNK. Interacts with GARRE1. In terms of processing, hydroxylated. 4-hydroxylation appears to enhance protein stability but is not required for miRNA-binding or endonuclease activity. Post-translationally, ubiquitinated on surface-exposed lysines by a SCF-like E3 ubiquitin-protein ligase complex containing ZSWIM8 during target-directed microRNA degradation (TDMD), a process that mediates degradation of microRNAs (miRNAs). Ubiquitination by the SCF-like E3 ubiquitin-protein ligase complex containing ZSWIM8 leads to its subsequent degradation, thereby exposing miRNAs for degradation. ZSWIM8 recognizes and binds AGO2 when it is engaged with a TDMD target. Phosphorylation at Ser-368 by AKT3; leads to up-regulate translational repression of microRNA target and down-regulate endonucleolytic cleavage. In terms of processing, a phosphorylation cycle of C-terminal serine cluster (Ser-805-Ser-815) regulates the release of target mRNAs. Target-binding leads to phosphorylation of these residues by CSNK1A1, which reduces the affinity of AGO2 for mRNA and enables target release. The ANKRD52-PPP6C phosphatase complex dephosphorylates the residues, which primes AGO2 for binding a new target.

Its subcellular location is the cytoplasm. It is found in the P-body. The protein resides in the nucleus. It catalyses the reaction Endonucleolytic cleavage to 5'-phosphomonoester.. Its function is as follows. Required for RNA-mediated gene silencing (RNAi) by the RNA-induced silencing complex (RISC). The 'minimal RISC' appears to include AGO2 bound to a short guide RNA such as a microRNA (miRNA) or short interfering RNA (siRNA). These guide RNAs direct RISC to complementary mRNAs that are targets for RISC-mediated gene silencing. The precise mechanism of gene silencing depends on the degree of complementarity between the miRNA or siRNA and its target. Binding of RISC to a perfectly complementary mRNA generally results in silencing due to endonucleolytic cleavage of the mRNA specifically by AGO2. Binding of RISC to a partially complementary mRNA results in silencing through inhibition of translation, and this is independent of endonuclease activity. May inhibit translation initiation by binding to the 7-methylguanosine cap, thereby preventing the recruitment of the translation initiation factor eIF4-E. May also inhibit translation initiation via interaction with EIF6, which itself binds to the 60S ribosomal subunit and prevents its association with the 40S ribosomal subunit. The inhibition of translational initiation leads to the accumulation of the affected mRNA in cytoplasmic processing bodies (P-bodies), where mRNA degradation may subsequently occur. In some cases RISC-mediated translational repression is also observed for miRNAs that perfectly match the 3' untranslated region (3'-UTR). Can also up-regulate the translation of specific mRNAs under certain growth conditions. Binds to the AU element of the 3'-UTR of the TNF (TNF-alpha) mRNA and up-regulates translation under conditions of serum starvation. Also required for transcriptional gene silencing (TGS), in which short RNAs known as antigene RNAs or agRNAs direct the transcriptional repression of complementary promoter regions. The protein is Protein argonaute-2 (AGO2) of Oryctolagus cuniculus (Rabbit).